Here is a 39-residue protein sequence, read N- to C-terminus: SPbeta prophage-derived membrane protein YosA (39 aa).

Residues 19 to 39 form a helical membrane-spanning segment; sequence SFVLIVVLFILLIIVGATFLY.

Belongs to the SscA family.

It is found in the membrane. In Bacillus subtilis (strain 168), this protein is SPbeta prophage-derived membrane protein YosA (yosA).